The chain runs to 222 residues: Acyl-protein thioesterase 1 homolog 2 (222 aa).

Active-site charge relay system residues include serine 116, aspartate 169, and histidine 202.

This sequence belongs to the AB hydrolase superfamily. AB hydrolase 2 family.

The protein localises to the cytoplasm. It is found in the nucleus. It carries out the reaction S-hexadecanoyl-L-cysteinyl-[protein] + H2O = L-cysteinyl-[protein] + hexadecanoate + H(+). Its function is as follows. Hydrolyzes fatty acids from S-acylated cysteine residues in proteins with a strong preference for palmitoylated G-alpha proteins over other acyl substrates. Mediates the deacylation of G-alpha proteins such as GPA1 in vivo, but has weak or no activity toward palmitoylated Ras proteins. Has weak lysophospholipase activity in vitro; however such activity may not exist in vivo. In Dictyostelium discoideum (Social amoeba), this protein is Acyl-protein thioesterase 1 homolog 2.